The chain runs to 206 residues: LysM and putative peptidoglycan-binding domain-containing protein 2 (206 aa).

Residues 59-103 (IEHCLSPSDTLQGIALKYGVTMEQIKRANKLFSTDCIFLRKSLNI) form the LysM domain. A disordered region spans residues 184–206 (AQRLKEEDDLRHDGSYATCSYQH). Residues 186-197 (RLKEEDDLRHDG) show a composition bias toward basic and acidic residues.

This chain is LysM and putative peptidoglycan-binding domain-containing protein 2 (lysmd2), found in Xenopus laevis (African clawed frog).